The following is a 401-amino-acid chain: Phosphoglycerate kinase, cytosolic (401 aa).

Residues Val24, Asp25, Asn27, Arg41, Ser63, His64, Gly66, Arg67, Arg122, His154, and Arg155 each contribute to the (2R)-3-phosphoglycerate site. Gly200 is a binding site for ADP. Residue Gly200 participates in CDP binding. The AMP site is built by Lys202 and Lys206. Position 206 (Lys206) interacts with ATP. ADP is bound at residue Gly224. A CDP-binding site is contributed by Gly224. AMP contacts are provided by Gly225 and Gly297. 2 residues coordinate ATP: Gly225 and Gly297. CDP is bound by residues Gly322 and Phe327. Residue Phe327 coordinates ADP. Glu328 is a binding site for AMP. Residues Glu328, Asp359, and Ser360 each contribute to the ATP site. Asp359 is a binding site for Mg(2+).

It belongs to the phosphoglycerate kinase family. In terms of assembly, monomer. Requires Mg(2+) as cofactor.

Its subcellular location is the cytoplasm. The catalysed reaction is (2R)-3-phosphoglycerate + ATP = (2R)-3-phospho-glyceroyl phosphate + ADP. It functions in the pathway carbohydrate degradation; glycolysis; pyruvate from D-glyceraldehyde 3-phosphate: step 2/5. This chain is Phosphoglycerate kinase, cytosolic, found in Nicotiana tabacum (Common tobacco).